An 82-amino-acid chain; its full sequence is Small ribosomal subunit protein bS16 (82 aa).

The protein belongs to the bacterial ribosomal protein bS16 family.

In Saccharophagus degradans (strain 2-40 / ATCC 43961 / DSM 17024), this protein is Small ribosomal subunit protein bS16.